Consider the following 643-residue polypeptide: uncharacterized protein (643 aa).

The segment at 561-643 (LNQELETSSE…GADRKKRGVY (83 aa)) is disordered. The span at 591 to 606 (SRGGRGGRGARGGNRG) shows a compositional bias: gly residues. A compositionally biased stretch (basic and acidic residues) spans 617–635 (GHDRQMKEKHKSDIKQRGA).

This is an uncharacterized protein from Caenorhabditis elegans.